The chain runs to 206 residues: Large ribosomal subunit protein uL4 (206 aa).

Positions Met-63 to Gly-85 are disordered.

The protein belongs to the universal ribosomal protein uL4 family. Part of the 50S ribosomal subunit.

In terms of biological role, one of the primary rRNA binding proteins, this protein initially binds near the 5'-end of the 23S rRNA. It is important during the early stages of 50S assembly. It makes multiple contacts with different domains of the 23S rRNA in the assembled 50S subunit and ribosome. Functionally, forms part of the polypeptide exit tunnel. The chain is Large ribosomal subunit protein uL4 from Beijerinckia indica subsp. indica (strain ATCC 9039 / DSM 1715 / NCIMB 8712).